Here is a 56-residue protein sequence, read N- to C-terminus: Serine protease inhibitor Kazal-type 1 (56 aa).

Positions 3–56 (PQREATCTSEVSGCPKIYNPVCGTDGITYSNECVLCSENKKRQTPVLIQKSGPC) constitute a Kazal-like domain. Cystine bridges form between C9-C38, C16-C35, and C24-C56.

It localises to the secreted. Functionally, serine protease inhibitor which exhibits anti-trypsin activity. In the pancreas, protects against trypsin-catalyzed premature activation of zymogens. In the male reproductive tract, binds to sperm heads where it modulates sperm capacitance by inhibiting calcium uptake and nitrogen oxide (NO) production. The polypeptide is Serine protease inhibitor Kazal-type 1 (SPINK1) (Sus scrofa (Pig)).